The chain runs to 100 residues: NADH-quinone oxidoreductase subunit K (100 aa).

3 helical membrane-spanning segments follow: residues 4-24 (LQHG…GLLI), 28-48 (LLFM…AFVV), and 60-80 (VMYI…LALL).

The protein belongs to the complex I subunit 4L family. NDH-1 is composed of 13 different subunits. Subunits NuoA, H, J, K, L, M, N constitute the membrane sector of the complex.

Its subcellular location is the cell inner membrane. The catalysed reaction is a quinone + NADH + 5 H(+)(in) = a quinol + NAD(+) + 4 H(+)(out). NDH-1 shuttles electrons from NADH, via FMN and iron-sulfur (Fe-S) centers, to quinones in the respiratory chain. The immediate electron acceptor for the enzyme in this species is believed to be ubiquinone. Couples the redox reaction to proton translocation (for every two electrons transferred, four hydrogen ions are translocated across the cytoplasmic membrane), and thus conserves the redox energy in a proton gradient. The sequence is that of NADH-quinone oxidoreductase subunit K from Yersinia pseudotuberculosis serotype O:1b (strain IP 31758).